Consider the following 3391-residue polypeptide: MNNQRKKARNTPFNMLKRERNRVSTVQQLTKRFSLGMLQGRGPLKLFMALVAFLRFLTIPPTAGILKRWGTIKKSKAINVLRGFRKEIGRMLNILNRRRRTAGMIIMLIPTVMAFHLTTRNGEPHMIVSRQEKGKSLLFKTEDGVNMCTLMAMDLGELCEDTITYKCPFLKQNEPEDIDCWCNSTSTWVTYGTCTTTGEHRREKRSVALVPHVGMGLETRTETWMSSEGAWKHAQRIETWILRHPGFTIMAAILAYTIGTTHFQRALIFILLTAVAPSMTMRCIGISNRDFVEGVSGGSWVDIVLEHGSCVTTMAKNKPTLDFELIETEAKQPATLRKYCIEAKLTNTTTDSRCPTQGEPSLNEEQDKRFVCKHSMVDRGWGNGCGLFGKGGIVTCAMFTCKKNMKGKVVQPENLEYTIVITPHSGEEHAVGNDTGKHGKEIKITPQSSITEAELTGYGTVTMECSPRTGLDFNEMVLLQMENKAWLVHRQWFLDLPLPWLPGADTQGSNWIQKETLVTFKNPHAKKQDVVVLGSQEGAMHTALTGATEIQMSSGNLLFTGHLKCRLRMDKLQLKGMSYSMCTGKFKVVKEIAETQHGTIVIRVQYEGDGSPCKIPFEIMDLEKRHVLGRLITVNPIVTEKDSPVNIEAEPPFGDSYIIIGVEPGQLKLNWFKKGSSIGQMIETTMRGAKRMAILGDTAWDFGSLGGVFTSIGKALHQVFGAIYGAAFSGVSWIMKILIGVIITWIGMNSRSTSLSVSLVLVGVVTLYLGVMVQADSGCVVSWKNKELKCGSGIFITDNVHTWTEQYKFQPESPSKLASAIQKAHEEGICGIRSVTRLENLMWKQITPELNHILSENEVKLTIMTGDIKGIMQAGKRSLQPQPTELKYSWKTWGKAKMLSTESHNQTFLIDGPETAECPNTNRAWNSLEVEDYGFGVFTTNIWLKLREKQDVFCDSKLMSAAIKDNRAVHADMGYWIESALNDTWKIEKASFIEVKSCHWPKSHTLWSNGVLESEMIIPKNFAGPVSQHNYRPGYHTQTAGPWHLGKLEMDFDFCEGTTVVVTEDCGNRGPSLRTTTASGKLITEWCCRSCTLPPLRYRGEDGCWYGMEIRPLKEKEENLVNSLVTAGHGQIDNFSLGVLGMALFLEEMLRTRVGTKHAILLVAVSFVTLITGNMSFRDLGRVMVMVGATMTDDIGMGVTYLALLAAFKVRPTFAAGLLLRKLTSKELMMTTIGIVLLSQSTIPETILELTDALALGMMVLKMVRKMEKYQLAVTIMAILCVPNAVILQNAWKVSCTILAVVSVSPLFLTSSQQKADWIPLALTIKGLNPTAIFLTTLSRTNKKRSWPLNEAIMAVGMVSILASSLLKNDIPMTGPLVAGGLLTVCYVLTGRSADLELERAADVKWEDQAEISGSSPILSITISEDGSMSIKNEEEEQTLTILIRTGLLVISGLFPVSIPITAAAWYLWEVKKQRAGVLWDVPSPPPVGKAELEDGAYRIKQKGILGYSQIGAGVYKEGTFHTMWHVTRGAVLMHKGKRIEPSWADVKKDLISYGGGWKLEGEWKEGEEVQVLALEPGKNPRAVQTKPGLFKTNAGTIGAVSLDFSPGTSGSPIIDKKGKVVGLYGNGVVTRSGAYVSAIAQTEKSIEDNPEIEDDIFRKRKLTIMDLHPGAGKTKRYLPAIVREAIKRGLRTLILAPTRVVAAEMEEALRGLPIRYQTPAIRAEHTGREIVDLMCHATFTMRLLSPVRVPNYNLIIMDEAHFTDPASIAARGYISTRVEMGEAAGIFMTATPPGSRDPFPQSNAPIMDEEREIPERSWSSGHEWVTDFKGKTVWFVPSIKAGNDIAACLRKNGKKVIQLSRKTFDSEYVKTRTNDWDFVVTTDISEMGANFKAERVIDPRRCMKPVILTDGEERVILAGPMPVTHSSAAQRRGRIGRNPKNENDQYIYMGEPLENDEDCAHWKEAKMLLDNINTPEGIIPSMFEPEREKVDAIDGEYRLRGEARKTFVDLMRRGDLPVWLAYRVAAEGINYADRRWCFDGIKNNQILEENVEVEIWTKEGERKKLKPRWLDAKIYSDPLALKEFKEFAAGRKSLTLNLITEMGRLPTFMTQKARDALDNLAVLHTAEAGGRAYNHALSELPETLETLLLLTLLATVTGGIFLFLMSGRGIGKMTLGMCCIITASILLWYAQIQPHWIAASIILEFFLIVLLIPEPEKQRTPQDNQLTYVVIAILTVVAATMANEMGFLEKTKKDLGLGSITTQQPESNILDIDLRPASAWTLYAVATTFVTPMLRHSIENSSVNVSLTAIANQATVLMGLGKGWPLSKMDIGVPLLAIGCYSQVNPITLTAALFLLVAHYAIIGPGLQAKATREAQKRAAAGIMKNPTVDGITVIDLDPIPYDPKFEKQLGQVMLLVLCVTQVLMMRTTWALCEALTLATGPISTLWEGNPGRFWNTTIAVSMANIFRGSYLAGAGLLFSIMKNTTNTRRGTGNIGETLGEKWKSRLNALGKSEFQIYKKSGIQEVDRTLAKEGIKRGETDHHAVSRGSAKLRWFVERNMVTPEGKVVDLGCGRGGWSYYCGGLKNVREVKGLTKGGPGHEEPIPMSTYGWNLVRLQSGVDVFFTPPEKCDTLLCDIGESSPNPTVEAGRTLRVLNLVENWLNNNTQFCIKVLNPYMPSVIEKMEALQRKYGGALVRNPLSRNSTHEMYWLSNASGNIVSSVNMISRMLINRFTMRHKKATYEPDVDLGSGTRNIGIESEIPNLDIIGKRIEKIKQEHETSWHYDQDHPYKTWAYHGSYETKQTGSASSMGNGVVRLLTKPWDVVPMVTQMAMTDTTPFGQQRVFKEKVDTRTQEPKEGTKKLMKITAEWLWKELGKKKTPRMCTREEFTRKVRSNAALGAIFTDENKWKSAREAVEDSRFWELVDKERNLHLEGKCETCVYNMMGKREKKLGEFGKAKGSRAIWYMWLGARFLEFEALGFLNEDHWFSRENSLSGVEGEGLHKLGYILRDVSKKEGGAMYADDTAGWDTRITLEDLKNEEMVTNHMEGEHKKLAEAIFKLTYQNKVVRVQRPTPRGTVMDIISRRDQRGSGQVGTYGLNTFTNMEAQLIRQMEGEGVFKSIQHLTVTEEIAVQNWLARVGRERLSRMAISGDDCVVKPLDDRFASALTALNDMGKVRKDIQQWEPSRGWNDWTQVPFCSHHFHELIMKDGRVLVVPCRNQDELIGRARISQGAGWSLRETACLGKSYAQMWSLMYFHRRDLRLAANAICSAVPSHWVPTSRTTWSIHAKHEWMTTEDMLTVWNRVWIQENPWMEDKTPVESWEEIPYLGKREDQWCGSLIGLTSRATWAKNIQTAINQVRSLIGNEEYTDYMPSMKRFRKEEEEAGVLW.

Residues 1–15 (MNNQRKKARNTPFNM) are interaction with host EXOC1. The Cytoplasmic portion of the chain corresponds to 1 to 101 (MNNQRKKARN…LNILNRRRRT (101 aa)). Residues 37-72 (MLQGRGPLKLFMALVAFLRFLTIPPTAGILKRWGTI) form a hydrophobic; homodimerization of capsid protein C region. Residues 101 to 114 (TAGMIIMLIPTVMA) constitute a propeptide, ER anchor for the capsid protein C, removed in mature form by serine protease NS3. The helical transmembrane segment at 102–122 (AGMIIMLIPTVMAFHLTTRNG) threads the bilayer. Over 123–238 (EPHMIVSRQE…GAWKHAQRIE (116 aa)) the chain is Extracellular. Asn-183 carries N-linked (GlcNAc...) asparagine; by host glycosylation. The chain crosses the membrane as a helical span at residues 239-259 (TWILRHPGFTIMAAILAYTIG). At 260 to 265 (TTHFQR) the chain is on the cytoplasmic side. The chain crosses the membrane as a helical span at residues 266 to 280 (ALIFILLTAVAPSMT). The Extracellular portion of the chain corresponds to 281–725 (MRCIGISNRD…LHQVFGAIYG (445 aa)). 4 disulfides stabilise this stretch: Cys-283-Cys-310, Cys-340-Cys-401, Cys-354-Cys-385, and Cys-372-Cys-396. N-linked (GlcNAc...) asparagine; by host glycosylation is present at Asn-347. Residues 378-391 (DRGWGNGCGLFGKG) are fusion peptide. Residue Asn-433 is glycosylated (N-linked (GlcNAc...) asparagine; by host). Cystine bridges form between Cys-465-Cys-565 and Cys-582-Cys-613. Residues 726–746 (AAFSGVSWIMKILIGVIITWI) form a helical membrane-spanning segment. Over 747-752 (GMNSRS) the chain is Cytoplasmic. A helical membrane pass occupies residues 753–773 (TSLSVSLVLVGVVTLYLGVMV). Topologically, residues 774–1195 (QADSGCVVSW…MVGATMTDDI (422 aa)) are extracellular. Cystine bridges form between Cys-779/Cys-790, Cys-830/Cys-918, Cys-954/Cys-998, Cys-1055/Cys-1104, Cys-1066/Cys-1088, and Cys-1087/Cys-1091. Residues Asn-905 and Asn-982 are each glycosylated (N-linked (GlcNAc...) asparagine; by host). The helical transmembrane segment at 1196–1220 (GMGVTYLALLAAFKVRPTFAAGLLL) threads the bilayer. Residues 1221–1226 (RKLTSK) are Cytoplasmic-facing. The helical transmembrane segment at 1227 to 1245 (ELMMTTIGIVLLSQSTIPE) threads the bilayer. At 1246–1269 (TILELTDALALGMMVLKMVRKMEK) the chain is on the lumenal side. The helical transmembrane segment at 1270–1290 (YQLAVTIMAILCVPNAVILQN) threads the bilayer. Ala-1291 is a topological domain (cytoplasmic). The chain crosses the membrane as a helical span at residues 1292–1310 (WKVSCTILAVVSVSPLFLT). Residues 1311–1317 (SSQQKAD) are Lumenal-facing. A helical membrane pass occupies residues 1318–1338 (WIPLALTIKGLNPTAIFLTTL). Residues 1339-1346 (SRTNKKRS) lie on the Cytoplasmic side of the membrane. A helical membrane pass occupies residues 1347-1367 (WPLNEAIMAVGMVSILASSLL). Residues 1368–1370 (KND) lie on the Lumenal side of the membrane. A helical transmembrane segment spans residues 1371-1391 (IPMTGPLVAGGLLTVCYVLTG). Residues 1392–1447 (RSADLELERAADVKWEDQAEISGSSPILSITISEDGSMSIKNEEEEQTLTILIRTG) are Cytoplasmic-facing. The segment at 1398–1437 (LERAADVKWEDQAEISGSSPILSITISEDGSMSIKNEEEE) is interacts with and activates NS3 protease. Residues 1448–1468 (LLVISGLFPVSIPITAAAWYL) constitute an intramembrane region (helical). Topologically, residues 1469-2147 (WEVKKQRAGV…LSELPETLET (679 aa)) are cytoplasmic. Residues 1476-1653 (AGVLWDVPSP…EKSIEDNPEI (178 aa)) form the Peptidase S7 domain. Active-site charge relay system; for serine protease NS3 activity residues include His-1526, Asp-1550, and Ser-1610. The Helicase ATP-binding domain maps to 1655 to 1811 (DDIFRKRKLT…QSNAPIMDEE (157 aa)). An important for RNA-binding region spans residues 1659-1662 (RKRK). An ATP-binding site is contributed by 1668 to 1675 (LHPGAGKT). A DEAH box motif is present at residues 1759–1762 (DEAH). The 168-residue stretch at 1821 to 1988 (SGHEWVTDFK…IIPSMFEPER (168 aa)) folds into the Helicase C-terminal domain. N6-acetyllysine; by host is present on Lys-1863. The helical transmembrane segment at 2148–2168 (LLLLTLLATVTGGIFLFLMSG) threads the bilayer. Over 2169-2170 (RG) the chain is Lumenal. Residues 2171–2191 (IGKMTLGMCCIITASILLWYA) constitute an intramembrane region (helical). Gln-2192 is a topological domain (lumenal). Residues 2193–2213 (IQPHWIAASIILEFFLIVLLI) traverse the membrane as a helical segment. The Cytoplasmic portion of the chain corresponds to 2214–2228 (PEPEKQRTPQDNQLT). The helical transmembrane segment at 2229–2249 (YVVIAILTVVAATMANEMGFL) threads the bilayer. At 2250–2274 (EKTKKDLGLGSITTQQPESNILDID) the chain is on the lumenal side. The helical intramembrane region spans 2275–2295 (LRPASAWTLYAVATTFVTPML). Residues 2296-2316 (RHSIENSSVNVSLTAIANQAT) are Lumenal-facing. N-linked (GlcNAc...) asparagine; by host glycans are attached at residues Asn-2301 and Asn-2305. An intramembrane region (helical) is located at residues 2317–2337 (VLMGLGKGWPLSKMDIGVPLL). Residues 2338 to 2347 (AIGCYSQVNP) lie on the Lumenal side of the membrane. Residues 2348-2368 (ITLTAALFLLVAHYAIIGPGL) traverse the membrane as a helical segment. At 2369–2413 (QAKATREAQKRAAAGIMKNPTVDGITVIDLDPIPYDPKFEKQLGQ) the chain is on the cytoplasmic side. A helical transmembrane segment spans residues 2414–2434 (VMLLVLCVTQVLMMRTTWALC). Residues 2435–2459 (EALTLATGPISTLWEGNPGRFWNTT) are Lumenal-facing. A glycan (N-linked (GlcNAc...) asparagine; by host) is linked at Asn-2457. A helical transmembrane segment spans residues 2460-2480 (IAVSMANIFRGSYLAGAGLLF). Over 2481 to 3391 (SIMKNTTNTR…KEEEEAGVLW (911 aa)) the chain is Cytoplasmic. In terms of domain architecture, mRNA cap 0-1 NS5-type MT spans 2493-2755 (TGNIGETLGE…DVDLGSGTRN (263 aa)). Ser-2547 contacts S-adenosyl-L-methionine. Ser-2547 is modified (phosphoserine). The active-site For 2'-O-MTase activity is the Lys-2552. The short motif at 2568 to 2571 (VVDL) is the SUMO-interacting motif element. Positions 2577, 2578, 2595, 2596, 2622, and 2623 each coordinate S-adenosyl-L-methionine. Asp-2637 acts as the For 2'-O-MTase activity in catalysis. Residue Ile-2638 participates in S-adenosyl-L-methionine binding. Catalysis depends on for 2'-O-MTase activity residues Lys-2672 and Glu-2708. Tyr-2710 provides a ligand contact to S-adenosyl-L-methionine. Glu-2929, His-2933, Cys-2938, and Cys-2941 together coordinate Zn(2+). One can recognise a RdRp catalytic domain in the interval 3019–3168 (GAMYADDTAG…KPLDDRFASA (150 aa)). Residues His-3203, Cys-3219, and Cys-3338 each coordinate Zn(2+).

This sequence in the N-terminal section; belongs to the class I-like SAM-binding methyltransferase superfamily. mRNA cap 0-1 NS5-type methyltransferase family. Homodimer. Interacts (via N-terminus) with host EXOC1 (via C-terminus); this interaction results in EXOC1 degradation through the proteasome degradation pathway. In terms of assembly, forms heterodimers with envelope protein E in the endoplasmic reticulum and Golgi. As to quaternary structure, homodimer; in the endoplasmic reticulum and Golgi. Interacts with protein prM. Interacts with non-structural protein 1. Homodimer; Homohexamer when secreted. Interacts with envelope protein E. Interacts with host PRKAA1. In terms of assembly, interacts (via N-terminus) with serine protease NS3. As to quaternary structure, forms a heterodimer with serine protease NS3. May form homooligomers. Forms a heterodimer with NS2B. Interacts with NS4B. Interacts with unphosphorylated RNA-directed RNA polymerase NS5; this interaction stimulates RNA-directed RNA polymerase NS5 guanylyltransferase activity. Interacts with host SHFL. In terms of assembly, interacts with host MAVS; this interaction inhibits the synthesis of IFN-beta. Interacts with host MAVS; this interaction inhibits the synthesis of IFN-beta. Interacts with host SHFL. Interacts with host AUP1; the interaction occurs in the presence of Dengue virus NS4B and induces lipophagy which facilitates production of virus progeny particles. May interact with host SRPRA and SEC61G. As to quaternary structure, interacts with serine protease NS. Homodimer. Interacts with host STAT2; this interaction inhibits the phosphorylation of the latter, and, when all viral proteins are present (polyprotein), targets STAT2 for degradation. Interacts with serine protease NS3. Interacts with host PAF1 complex; the interaction may prevent the recruitment of the PAF1 complex to interferon-responsive genes, and thus reduces the immune response. Specific enzymatic cleavages in vivo yield mature proteins. Cleavages in the lumen of endoplasmic reticulum are performed by host signal peptidase, whereas cleavages in the cytoplasmic side are performed by serine protease NS3. Signal cleavage at the 2K-4B site requires a prior NS3 protease-mediated cleavage at the 4A-2K site. Post-translationally, cleaved in post-Golgi vesicles by a host furin, releasing the mature small envelope protein M, and peptide pr. This cleavage is incomplete as up to 30% of viral particles still carry uncleaved prM. In terms of processing, N-glycosylated. N-glycosylated. The excreted form is glycosylated and this is required for efficient secretion of the protein from infected cells. Post-translationally, acetylated by host KAT5. Acetylation modulates NS3 RNA-binding and unwinding activities and plays an important positive role for viral replication. In terms of processing, sumoylation of RNA-directed RNA polymerase NS5 increases NS5 protein stability allowing proper viral RNA replication. Phosphorylated on serines residues. This phosphorylation may trigger NS5 nuclear localization.

It is found in the virion. The protein localises to the host nucleus. The protein resides in the host cytoplasm. It localises to the host perinuclear region. Its subcellular location is the secreted. It is found in the virion membrane. The protein localises to the host endoplasmic reticulum membrane. The protein resides in the host mitochondrion. The enzyme catalyses Selective hydrolysis of -Xaa-Xaa-|-Yaa- bonds in which each of the Xaa can be either Arg or Lys and Yaa can be either Ser or Ala.. It carries out the reaction RNA(n) + a ribonucleoside 5'-triphosphate = RNA(n+1) + diphosphate. The catalysed reaction is a ribonucleoside 5'-triphosphate + H2O = a ribonucleoside 5'-diphosphate + phosphate + H(+). It catalyses the reaction ATP + H2O = ADP + phosphate + H(+). The enzyme catalyses a 5'-end (5'-triphosphoguanosine)-ribonucleoside in mRNA + S-adenosyl-L-methionine = a 5'-end (N(7)-methyl 5'-triphosphoguanosine)-ribonucleoside in mRNA + S-adenosyl-L-homocysteine. It carries out the reaction a 5'-end (N(7)-methyl 5'-triphosphoguanosine)-ribonucleoside in mRNA + S-adenosyl-L-methionine = a 5'-end (N(7)-methyl 5'-triphosphoguanosine)-(2'-O-methyl-ribonucleoside) in mRNA + S-adenosyl-L-homocysteine + H(+). Plays a role in virus budding by binding to the cell membrane and gathering the viral RNA into a nucleocapsid that forms the core of a mature virus particle. During virus entry, may induce genome penetration into the host cytoplasm after hemifusion induced by the surface proteins. Can migrate to the cell nucleus where it modulates host functions. Overcomes the anti-viral effects of host EXOC1 by sequestering and degrading the latter through the proteasome degradation pathway. Its function is as follows. Inhibits RNA silencing by interfering with host Dicer. In terms of biological role, prevents premature fusion activity of envelope proteins in trans-Golgi by binding to envelope protein E at pH6.0. After virion release in extracellular space, gets dissociated from E dimers. Functionally, acts as a chaperone for envelope protein E during intracellular virion assembly by masking and inactivating envelope protein E fusion peptide. prM is the only viral peptide matured by host furin in the trans-Golgi network probably to avoid catastrophic activation of the viral fusion activity in acidic Golgi compartment prior to virion release. prM-E cleavage is inefficient, and many virions are only partially matured. These uncleaved prM would play a role in immune evasion. May play a role in virus budding. Exerts cytotoxic effects by activating a mitochondrial apoptotic pathway through M ectodomain. May display a viroporin activity. Its function is as follows. Binds to host cell surface receptor and mediates fusion between viral and cellular membranes. Envelope protein is synthesized in the endoplasmic reticulum in the form of heterodimer with protein prM. They play a role in virion budding in the ER, and the newly formed immature particle is covered with 60 spikes composed of heterodimer between precursor prM and envelope protein E. The virion is transported to the Golgi apparatus where the low pH causes dissociation of PrM-E heterodimers and formation of E homodimers. prM-E cleavage is inefficient, and many virions are only partially matured. These uncleaved prM would play a role in immune evasion. In terms of biological role, involved in immune evasion, pathogenesis and viral replication. Once cleaved off the polyprotein, is targeted to three destinations: the viral replication cycle, the plasma membrane and the extracellular compartment. Essential for viral replication. Required for formation of the replication complex and recruitment of other non-structural proteins to the ER-derived membrane structures. Excreted as a hexameric lipoparticle that plays a role against host immune response. Antagonizing the complement function. Binds to the host macrophages and dendritic cells. Inhibits signal transduction originating from Toll-like receptor 3 (TLR3). Mediates complement activation, which may contribute to the pathogenesis of the vascular leakage that occurs in severe dengue disease. Activates autophagy through the AMPK/ERK/mTOR signaling pathway. Mechanistically, acts as the assembly platform for STK11-AMPK interactions and promotes STK11-AMPK interactions. In turn, promotes phosphorylation of the AMPK kinase structural domain and activates AMPK, thereby positively regulating the AMPK/ERK/mTOR signaling pathway and inducing autophagy. Functionally, disrupts the host endothelial glycocalyx layer of host pulmonary microvascular endothelial cells, inducing degradation of sialic acid and shedding of heparan sulfate proteoglycans. NS1 induces expression of sialidases, heparanase, and activates cathepsin L, which activates heparanase via enzymatic cleavage. These effects are probably linked to the endothelial hyperpermeability observed in severe dengue disease. Component of the viral RNA replication complex that functions in virion assembly and antagonizes the host immune response. Its function is as follows. Required cofactor for the serine protease function of NS3. May have membrane-destabilizing activity and form viroporins. In terms of biological role, displays three enzymatic activities: serine protease, NTPase and RNA helicase. NS3 serine protease, in association with NS2B, performs its autocleavage and cleaves the polyprotein at dibasic sites in the cytoplasm: C-prM, NS2A-NS2B, NS2B-NS3, NS3-NS4A, NS4A-2K and NS4B-NS5. NS3 RNA helicase binds RNA and unwinds dsRNA in the 3' to 5' direction. Functionally, regulates the ATPase activity of the NS3 helicase activity. NS4A allows NS3 helicase to conserve energy during unwinding. Plays a role in the inhibition of the host innate immune response. Interacts with host MAVS and thereby prevents the interaction between RIGI and MAVS. In turn, IFN-beta production is impaired. Interacts with host AUP1 which mediates induction of lipophagy in host cells and facilitates production of virus progeny particles. Functions as a signal peptide for NS4B and is required for the interferon antagonism activity of the latter. Its function is as follows. Induces the formation of ER-derived membrane vesicles where the viral replication takes place. Inhibits interferon (IFN)-induced host STAT1 phosphorylation and nuclear translocation, thereby preventing the establishment of cellular antiviral state by blocking the IFN-alpha/beta pathway. In terms of biological role, replicates the viral (+) and (-) RNA genome, and performs the capping of genomes in the cytoplasm. NS5 methylates viral RNA cap at guanine N-7 and ribose 2'-O positions. Besides its role in RNA genome replication, also prevents the establishment of cellular antiviral state by blocking the interferon-alpha/beta (IFN-alpha/beta) signaling pathway. Inhibits host TYK2 and STAT2 phosphorylation, thereby preventing activation of JAK-STAT signaling pathway. May reduce immune responses by preventing the recruitment of the host PAF1 complex to interferon-responsive genes. The polypeptide is Genome polyprotein (Aedimorphus (Red guenon)).